The following is a 98-amino-acid chain: NADH-ubiquinone oxidoreductase chain 4L (98 aa).

The next 3 membrane-spanning stretches (helical) occupy residues 1-21, 29-49, and 59-79; these read MSIV…GTLL, SLMC…LISL, and VPLI…ALLV.

Belongs to the complex I subunit 4L family. As to quaternary structure, core subunit of respiratory chain NADH dehydrogenase (Complex I) which is composed of 45 different subunits.

It localises to the mitochondrion inner membrane. It carries out the reaction a ubiquinone + NADH + 5 H(+)(in) = a ubiquinol + NAD(+) + 4 H(+)(out). Core subunit of the mitochondrial membrane respiratory chain NADH dehydrogenase (Complex I) which catalyzes electron transfer from NADH through the respiratory chain, using ubiquinone as an electron acceptor. Part of the enzyme membrane arm which is embedded in the lipid bilayer and involved in proton translocation. This is NADH-ubiquinone oxidoreductase chain 4L (MT-ND4L) from Hemiechinus auritus (Long-eared hedgehog).